Reading from the N-terminus, the 384-residue chain is Early estrogen-induced gene 1 protein (384 aa).

The C2 NT-type domain maps to 2–145; that stretch reads AFLMKKKKFK…ILKVTIGMFL (144 aa). The segment at 129–138 is required for interaction with TNFRSF11A/RANK; the sequence is NTRQDNSILK. Residues 173–315 form a disordered region; sequence LTCKGGGTSS…RRKKDSVESH (143 aa). Positions 183–193 are enriched in low complexity; that stretch reads GGSSTNSLTGS. A compositionally biased stretch (polar residues) spans 227–254; the sequence is SRNSSYASQQSKISGYSTEHSRSSSLSD. Composition is skewed to basic and acidic residues over residues 280-292 and 299-315; these read GSER…EKPP and HLSD…VESH.

The protein belongs to the EEIG family. Part of a complex composed of EEIG1, TNFRSF11A/RANK, PLCG2, GAB2, TEC and BTK; complex formation increases in the presence of TNFSF11/RANKL. Interacts with PRDM1/BLIMP1; following TNFSF11/RANKL stimulation in bone marrow-derived macrophages, the interaction promotes the binding of PRDM1/BLIMP1 to the gene promoter of IRF8.

It is found in the nucleus. Its subcellular location is the cytoplasm. The protein resides in the membrane raft. Its function is as follows. Key component of TNFSF11/RANKL- and TNF-induced osteoclastogenesis pathways, thereby mediates bone resorption in pathological bone loss conditions. Required for TNFSF11/RANKL-induced osteoclastogenesis via its interaction with TNFRSF11A/RANK, thereby facilitates the downsteam transcription of NFATC1 and activation of PLCG2. Facilitates recruitment of the transcriptional repressor PRDM1/BLIMP1 to the promoter of the anti-osteoclastogenesis gene IRF8, thereby resulting in transcription of osteoclast differentiation factors. May play a role in estrogen action. The chain is Early estrogen-induced gene 1 protein from Homo sapiens (Human).